Consider the following 440-residue polypeptide: Xylose isomerase (440 aa).

Active-site residues include H101 and D104. Mg(2+)-binding residues include E232, E268, H271, D296, D307, D309, and D339.

The protein belongs to the xylose isomerase family. As to quaternary structure, homotetramer. It depends on Mg(2+) as a cofactor.

Its subcellular location is the cytoplasm. The enzyme catalyses alpha-D-xylose = alpha-D-xylulofuranose. The sequence is that of Xylose isomerase from Salmonella typhi.